Reading from the N-terminus, the 807-residue chain is Leucine--tRNA ligase (807 aa).

A 'HIGH' region motif is present at residues 40 to 51 (PYPSGSGLHVGH). A 'KMSKS' region motif is present at residues 576-580 (KMSKS). Residue lysine 579 participates in ATP binding.

This sequence belongs to the class-I aminoacyl-tRNA synthetase family.

It localises to the cytoplasm. The enzyme catalyses tRNA(Leu) + L-leucine + ATP = L-leucyl-tRNA(Leu) + AMP + diphosphate. The chain is Leucine--tRNA ligase from Chlorobaculum parvum (strain DSM 263 / NCIMB 8327) (Chlorobium vibrioforme subsp. thiosulfatophilum).